Reading from the N-terminus, the 546-residue chain is Probable Xaa-Pro aminopeptidase pepP (546 aa).

Positions 341, 352, 475, and 515 each coordinate Mn(2+).

This sequence belongs to the peptidase M24B family. Mn(2+) is required as a cofactor.

The catalysed reaction is Release of any N-terminal amino acid, including proline, that is linked to proline, even from a dipeptide or tripeptide.. In terms of biological role, catalyzes the removal of a penultimate prolyl residue from the N-termini of peptides. This is Probable Xaa-Pro aminopeptidase pepP (pepP) from Sclerotinia sclerotiorum (strain ATCC 18683 / 1980 / Ss-1) (White mold).